Consider the following 276-residue polypeptide: 5'-nucleotidase SurE (276 aa).

A divalent metal cation-binding residues include Asp14, Asp15, Ser46, and Asn104.

Belongs to the SurE nucleotidase family. It depends on a divalent metal cation as a cofactor.

It is found in the cytoplasm. It carries out the reaction a ribonucleoside 5'-phosphate + H2O = a ribonucleoside + phosphate. In terms of biological role, nucleotidase that shows phosphatase activity on nucleoside 5'-monophosphates. This is 5'-nucleotidase SurE from Crocosphaera subtropica (strain ATCC 51142 / BH68) (Cyanothece sp. (strain ATCC 51142)).